We begin with the raw amino-acid sequence, 622 residues long: MALLQISEPGMAPAPHQRRLAVGIDLGTTNSLVAAVRNSVPEVLPDEAGRVLLPSVVRYLEKGGRRIGHEAKEQAATDPRNTIVSVKRFMGRGKAEVEGAANAPYEFVDAPGMVQIRTIDGVKSPVEVSAEILATLRYRAEDSLGDELVGAVITVPAYFDDAQRQATKDAARLAGLNVLRLLNEPTAAAIAYGLDNAAEGLYAVYDLGGGTFDLSILKLTKGVFEVLAAGGDSALGGDDFDHALFGHVLAQAGIDAKTLAPEDVRLLLDRVRVLKETLSSAPEAALDVTLSSGAHLVQTISHDTFASLVEPLVQRTLTPTRKALRDAQVTPADIKGVVLVGGATRMPVIRDAVAKYFGQPPLVNLDPDQVVALGAAIQADLLAGNRGTGDDWLLLDVIPLSLGVETMGGLVEKIIPRNSTIPIARAQEFTTFKDGQTAMAIHVVQGERELVADCRSLARFELRGIPPMTAGAARIRVTYQVDADGLLSVFAREQLSGVEASVVVKPSYGLADDDIAKMLEDSFKTAEIDMRARALREAQVEAERMLEATQAALAADGELLEADERAQVDTLAAALRAVAQGDDTNAIEAATKALADGTDEFAARRMDKSIKRALSGRRLDEI.

Belongs to the heat shock protein 70 family.

Functionally, chaperone involved in the maturation of iron-sulfur cluster-containing proteins. Has a low intrinsic ATPase activity which is markedly stimulated by HscB. This is Chaperone protein HscA homolog from Burkholderia orbicola (strain MC0-3).